Here is a 577-residue protein sequence, read N- to C-terminus: Insulin-like growth factor 2 mRNA-binding protein 1 (577 aa).

RRM domains are found at residues 2 to 75 (NKLY…HSVP) and 81 to 156 (RKIQ…YIPD). Phosphoserine is present on residues Ser12 and Ser73. The disordered stretch occupies residues 160-190 (AQGPENGRRGGFGSRGQPRQGSPVAAGAPAK). Ser181 bears the Phosphoserine mark. KH domains are found at residues 195–260 (DIPL…CKMI), 276–343 (EVPL…EQEI), 405–470 (QEMV…QGRI), and 487–553 (KLET…QRKI). The sufficient for nuclear export stretch occupies residues 310–324 (ITISSLQDLTLYNPE). Residues 485 to 495 (EVKLETHIRVP) are sufficient for nuclear export. Thr528 carries the post-translational modification Phosphothreonine.

This sequence belongs to the RRM IMP/VICKZ family. In terms of assembly, can form homodimers and heterodimers with IGF2BP1 and IGF2BP3. Component of the coding region determinant (CRD)-mediated complex, composed of DHX9, HNRNPU, IGF2BP1, SYNCRIP and YBX1. During HCV infection, identified in a HCV IRES-mediated translation complex, at least composed of EIF3C, IGF2BP1, RPS3 and HCV RNA-replicon. Interacts (via the KH domains) with HIV-1 GAG (via the second zinc finger motif of NC). Associates (via the RRM domains and KH domains) with HIV-1 particles. Identified in a mRNP complex, composed of at least DHX9, DDX3X, ELAVL1, HNRNPU, IGF2BP1, ILF3, PABPC1, PCBP2, PTBP2, STAU1, STAU2, SYNCRIP and YBX1. Identified in a IGF2BP1-dependent mRNP granule complex containing untranslated mRNAs. Interacts with DHX9, ELAVL2, HNRNPA2B1, HNRNPC, HNRNPH1, HNRNPU, IGF2BP2, ILF2, and YBX1. Interacts with FMR1. Component of a multisubunit autoregulatory RNP complex (ARC), at least composed of IGF2BP1, PABPC1 and CSDE1/UNR. Directly interacts with PABPC1. Component of a TAU mRNP complex, at least composed of IGF2BP1, ELAVL4 and G3BP. Interacts with ELAVL4 in an RNA-dependent manner. Associates with microtubules and polysomes. Interacts with AGO1 and AGO2. Interacts with ELAVL1 and MATR3. Interacts (via KH3 and KH4 domains) with SEPIN14P20 peptide RBRP; the interaction results in increased binding of IGF2BP1 to N6-methyladenosine (m6A)-containing mRNAs. Post-translationally, phosphorylated at Ser-181 by mTORC2 cotranslationally, promoting binding to the 3'-UTR of IGF2 mRNA. In terms of tissue distribution, mainly expressed in the embryo, including in fetal liver, fetal lung, fetal kidney, fetal thymus (at protein level). Also expressed follicles of ovary, as well as in gonocytes of testis, spermatogonia, semen, oocytes and placenta (at protein level). Expressed in various cancers, including testis and lung cancers (at protein level), as well as kidney, prostate and trachea cancers.

The protein localises to the nucleus. It is found in the cytoplasm. The protein resides in the perinuclear region. Its subcellular location is the P-body. It localises to the stress granule. The protein localises to the cell projection. It is found in the lamellipodium. The protein resides in the dendrite. Its subcellular location is the dendritic spine. It localises to the growth cone. The protein localises to the filopodium. It is found in the axon. Functionally, RNA-binding factor that recruits target transcripts to cytoplasmic protein-RNA complexes (mRNPs). This transcript 'caging' into mRNPs allows mRNA transport and transient storage. It also modulates the rate and location at which target transcripts encounter the translational apparatus and shields them from endonuclease attacks or microRNA-mediated degradation. Preferentially binds to N6-methyladenosine (m6A)-containing mRNAs and increases their stability. Plays a direct role in the transport and translation of transcripts required for axonal regeneration in adult sensory neurons. Regulates localized beta-actin/ACTB mRNA translation, a crucial process for cell polarity, cell migration and neurite outgrowth. Co-transcriptionally associates with the ACTB mRNA in the nucleus. This binding involves a conserved 54-nucleotide element in the ACTB mRNA 3'-UTR, known as the 'zipcode'. The RNP thus formed is exported to the cytoplasm, binds to a motor protein and is transported along the cytoskeleton to the cell periphery. During transport, prevents ACTB mRNA from being translated into protein. When the RNP complex reaches its destination near the plasma membrane, IGF2BP1 is phosphorylated. This releases the mRNA, allowing ribosomal 40S and 60S subunits to assemble and initiate ACTB protein synthesis. Monomeric ACTB then assembles into the subcortical actin cytoskeleton. During neuronal development, key regulator of neurite outgrowth, growth cone guidance and neuronal cell migration, presumably through the spatiotemporal fine tuning of protein synthesis, such as that of ACTB. May regulate mRNA transport to activated synapses. Binds to and stabilizes ABCB1/MDR-1 mRNA. During interstinal wound repair, interacts with and stabilizes PTGS2 transcript. PTGS2 mRNA stabilization may be crucial for colonic mucosal wound healing. Binds to the 3'-UTR of IGF2 mRNA by a mechanism of cooperative and sequential dimerization and regulates IGF2 mRNA subcellular localization and translation. Binds to MYC mRNA, in the coding region instability determinant (CRD) of the open reading frame (ORF), hence preventing MYC cleavage by endonucleases and possibly microRNA targeting to MYC-CRD. Binding to MYC mRNA is enhanced by m6A-modification of the CRD. Binds to the 3'-UTR of CD44 mRNA and stabilizes it, hence promotes cell adhesion and invadopodia formation in cancer cells. Binds to the oncofetal H19 transcript and to the neuron-specific TAU mRNA and regulates their localizations. Binds to and stabilizes BTRC/FBW1A mRNA. Binds to the adenine-rich autoregulatory sequence (ARS) located in PABPC1 mRNA and represses its translation. PABPC1 mRNA-binding is stimulated by PABPC1 protein. Prevents BTRC/FBW1A mRNA degradation by disrupting microRNA-dependent interaction with AGO2. Promotes the directed movement of tumor-derived cells by fine-tuning intracellular signaling networks. Binds to MAPK4 3'-UTR and inhibits its translation. Interacts with PTEN transcript open reading frame (ORF) and prevents mRNA decay. This combined action on MAPK4 (down-regulation) and PTEN (up-regulation) antagonizes HSPB1 phosphorylation, consequently it prevents G-actin sequestration by phosphorylated HSPB1, allowing F-actin polymerization. Hence enhances the velocity of cell migration and stimulates directed cell migration by PTEN-modulated polarization. Interacts with Hepatitis C virus (HCV) 5'-UTR and 3'-UTR and specifically enhances translation at the HCV IRES, but not 5'-cap-dependent translation, possibly by recruiting eIF3. Interacts with HIV-1 GAG protein and blocks the formation of infectious HIV-1 particles. Reduces HIV-1 assembly by inhibiting viral RNA packaging, as well as assembly and processing of GAG protein on cellular membranes. During cellular stress, such as oxidative stress or heat shock, stabilizes target mRNAs that are recruited to stress granules, including CD44, IGF2, MAPK4, MYC, PTEN, RAPGEF2 and RPS6KA5 transcripts. This chain is Insulin-like growth factor 2 mRNA-binding protein 1 (IGF2BP1), found in Homo sapiens (Human).